A 31-amino-acid polypeptide reads, in one-letter code: Cytochrome b6-f complex subunit 6 (31 aa).

The chain crosses the membrane as a helical span at residues L4–G24.

The protein belongs to the PetL family. In terms of assembly, the 4 large subunits of the cytochrome b6-f complex are cytochrome b6, subunit IV (17 kDa polypeptide, PetD), cytochrome f and the Rieske protein, while the 4 small subunits are PetG, PetL, PetM and PetN. The complex functions as a dimer.

The protein resides in the plastid. It localises to the chloroplast thylakoid membrane. In terms of biological role, component of the cytochrome b6-f complex, which mediates electron transfer between photosystem II (PSII) and photosystem I (PSI), cyclic electron flow around PSI, and state transitions. PetL is important for photoautotrophic growth as well as for electron transfer efficiency and stability of the cytochrome b6-f complex. This chain is Cytochrome b6-f complex subunit 6, found in Silene conica (Striped corn catchfly).